The sequence spans 408 residues: Probable 2,3-bisphosphoglycerate-independent phosphoglycerate mutase (408 aa).

Belongs to the BPG-independent phosphoglycerate mutase family. A-PGAM subfamily.

The catalysed reaction is (2R)-2-phosphoglycerate = (2R)-3-phosphoglycerate. The protein operates within carbohydrate degradation; glycolysis; pyruvate from D-glyceraldehyde 3-phosphate: step 3/5. Its function is as follows. Catalyzes the interconversion of 2-phosphoglycerate and 3-phosphoglycerate. The polypeptide is Probable 2,3-bisphosphoglycerate-independent phosphoglycerate mutase (Deinococcus geothermalis (strain DSM 11300 / CIP 105573 / AG-3a)).